Consider the following 367-residue polypeptide: Serine/threonine-protein phosphatase 2A activator 2 (367 aa).

It belongs to the PTPA-type PPIase family.

The protein resides in the cytoplasm. It catalyses the reaction [protein]-peptidylproline (omega=180) = [protein]-peptidylproline (omega=0). Functionally, PPIases accelerate the folding of proteins. It catalyzes the cis-trans isomerization of proline imidic peptide bonds in oligopeptides. Acts as a regulatory subunit for PP2A-like phosphatases modulating their activity or substrate specificity, probably by inducing a conformational change in the catalytic subunit, a direct target of the PPIase. Can reactivate inactive phosphatase PP2A-phosphatase methylesterase complexes (PP2Ai) in presence of ATP and Mg(2+) by dissociating the inactive form from the complex. The polypeptide is Serine/threonine-protein phosphatase 2A activator 2 (RRD2) (Debaryomyces hansenii (strain ATCC 36239 / CBS 767 / BCRC 21394 / JCM 1990 / NBRC 0083 / IGC 2968) (Yeast)).